Consider the following 569-residue polypeptide: Nuclear control of ATPase protein 2 (569 aa).

2 consecutive transmembrane segments (helical) span residues 279–299 (WPTILIALAGGPAGIAAIWNA) and 442–462 (LVFGIVSISPALLILYVLCNS).

The protein resides in the mitochondrion membrane. Involved in the mitochondrial expression of subunits 6 and 8 of the F0-F1 ATP synthase. The protein is Nuclear control of ATPase protein 2 (NCA2) of Eremothecium gossypii (strain ATCC 10895 / CBS 109.51 / FGSC 9923 / NRRL Y-1056) (Yeast).